The sequence spans 431 residues: Adenylosuccinate lyase (431 aa).

Residues 4 to 5, 67 to 69, and 93 to 94 each bind N(6)-(1,2-dicarboxyethyl)-AMP; these read RY, RHD, and TS. Histidine 141 functions as the Proton donor/acceptor in the catalytic mechanism. Glutamine 212 contributes to the N(6)-(1,2-dicarboxyethyl)-AMP binding site. Serine 262 acts as the Proton donor/acceptor in catalysis. Residues serine 263, 268-270, asparagine 276, and 307-311 each bind N(6)-(1,2-dicarboxyethyl)-AMP; these read KRN and SAERI.

This sequence belongs to the lyase 1 family. Adenylosuccinate lyase subfamily. As to quaternary structure, homodimer and homotetramer. Residues from neighboring subunits contribute catalytic and substrate-binding residues to each active site.

It carries out the reaction N(6)-(1,2-dicarboxyethyl)-AMP = fumarate + AMP. It catalyses the reaction (2S)-2-[5-amino-1-(5-phospho-beta-D-ribosyl)imidazole-4-carboxamido]succinate = 5-amino-1-(5-phospho-beta-D-ribosyl)imidazole-4-carboxamide + fumarate. It participates in purine metabolism; AMP biosynthesis via de novo pathway; AMP from IMP: step 2/2. The protein operates within purine metabolism; IMP biosynthesis via de novo pathway; 5-amino-1-(5-phospho-D-ribosyl)imidazole-4-carboxamide from 5-amino-1-(5-phospho-D-ribosyl)imidazole-4-carboxylate: step 2/2. In terms of biological role, catalyzes two reactions in de novo purine nucleotide biosynthesis. Catalyzes the breakdown of 5-aminoimidazole- (N-succinylocarboxamide) ribotide (SAICAR or 2-[5-amino-1-(5-phospho-beta-D-ribosyl)imidazole-4-carboxamido]succinate) to 5-aminoimidazole-4-carboxamide ribotide (AICAR or 5-amino-1-(5-phospho-beta-D-ribosyl)imidazole-4-carboxamide) and fumarate, and of adenylosuccinate (ADS or N(6)-(1,2-dicarboxyethyl)-AMP) to adenosine monophosphate (AMP) and fumarate. The protein is Adenylosuccinate lyase (purB) of Staphylococcus haemolyticus (strain JCSC1435).